The chain runs to 59 residues: Photosystem II reaction center protein K (59 aa).

The propeptide occupies 1–22 (MLNIFSLICLNSALYSSSFFFG). A helical membrane pass occupies residues 30 to 50 (FLSPIVDFMPVIPLFFFLLAF).

PSII is composed of 1 copy each of membrane proteins PsbA, PsbB, PsbC, PsbD, PsbE, PsbF, PsbH, PsbI, PsbJ, PsbK, PsbL, PsbM, PsbT, PsbX, PsbY, PsbZ, Psb30/Ycf12, at least 3 peripheral proteins of the oxygen-evolving complex and a large number of cofactors. It forms dimeric complexes. This protein, PsbL and plastoquinone-9 are found in PSII dimers but not seen in PSII monomers.

The protein localises to the plastid. It is found in the chloroplast thylakoid membrane. Functionally, one of the components of the core complex of photosystem II (PSII). PSII is a light-driven water:plastoquinone oxidoreductase that uses light energy to abstract electrons from H(2)O, generating O(2) and a proton gradient subsequently used for ATP formation. It consists of a core antenna complex that captures photons, and an electron transfer chain that converts photonic excitation into a charge separation. May be involved in PSII dimerization. One of the components of the core complex of photosystem II (PSII). PSII is a light-driven water:plastoquinone oxidoreductase that uses light energy to abstract electrons from H(2)O, generating O(2) and a proton gradient subsequently used for ATP formation. It consists of a core antenna complex that captures photons, and an electron transfer chain that converts photonic excitation into a charge separation. This Spinacia oleracea (Spinach) protein is Photosystem II reaction center protein K.